Reading from the N-terminus, the 310-residue chain is N-acetyl-gamma-glutamyl-phosphate reductase (310 aa).

Cys116 is a catalytic residue.

This sequence belongs to the NAGSA dehydrogenase family. Type 2 subfamily.

It localises to the cytoplasm. The catalysed reaction is N-acetyl-L-glutamate 5-semialdehyde + phosphate + NADP(+) = N-acetyl-L-glutamyl 5-phosphate + NADPH + H(+). The protein operates within amino-acid biosynthesis; L-arginine biosynthesis; N(2)-acetyl-L-ornithine from L-glutamate: step 3/4. Catalyzes the NADPH-dependent reduction of N-acetyl-5-glutamyl phosphate to yield N-acetyl-L-glutamate 5-semialdehyde. In Chelativorans sp. (strain BNC1), this protein is N-acetyl-gamma-glutamyl-phosphate reductase.